Consider the following 252-residue polypeptide: tRNA (guanine-N(7)-)-methyltransferase (252 aa).

Glu51, Asp76, Asn103, and Asp125 together coordinate S-adenosyl-L-methionine. Asp125 is an active-site residue. Substrate is bound by residues Lys129, Asp159, and 199–202; that span reads TYYE.

It belongs to the class I-like SAM-binding methyltransferase superfamily. TrmB family.

It catalyses the reaction guanosine(46) in tRNA + S-adenosyl-L-methionine = N(7)-methylguanosine(46) in tRNA + S-adenosyl-L-homocysteine. It functions in the pathway tRNA modification; N(7)-methylguanine-tRNA biosynthesis. Catalyzes the formation of N(7)-methylguanine at position 46 (m7G46) in tRNA. The protein is tRNA (guanine-N(7)-)-methyltransferase of Bacteroides fragilis (strain YCH46).